Reading from the N-terminus, the 58-residue chain is UPF0337 protein CE1672 (58 aa).

The span at 1 to 39 (MGLGDKIRNTAEKASGKVKEATGKATDNEKLEAEGKTDQ) shows a compositional bias: basic and acidic residues. Positions 1–58 (MGLGDKIRNTAEKASGKVKEATGKATDNEKLEAEGKTDQFKGNAKNTVENAKDTLRGN) are disordered.

Belongs to the UPF0337 (CsbD) family.

This is UPF0337 protein CE1672 from Corynebacterium efficiens (strain DSM 44549 / YS-314 / AJ 12310 / JCM 11189 / NBRC 100395).